We begin with the raw amino-acid sequence, 352 residues long: Probable protein kinase DDB_G0291842 (352 aa).

The disordered stretch occupies residues 1–57 (MRPLPDQSAFEDKSELVSKKQKNEDENNENRSPETPRTPKVCPKTPTKTPLRTPTKN). The segment covering 10–34 (FEDKSELVSKKQKNEDENNENRSPE) has biased composition (basic and acidic residues). Positions 38–56 (TPKVCPKTPTKTPLRTPTK) are enriched in low complexity. A Protein kinase domain is found at 77 to 331 (FEYINQIGEG…IQSLLKYDKL (255 aa)). ATP is bound by residues 83 to 91 (IGEGSFAKV) and K106. The active-site Proton acceptor is D207. Residues N212 and D225 each contribute to the Mg(2+) site.

This sequence belongs to the protein kinase superfamily. Ser/Thr protein kinase family. WEE1 subfamily.

It catalyses the reaction L-seryl-[protein] + ATP = O-phospho-L-seryl-[protein] + ADP + H(+). The catalysed reaction is L-threonyl-[protein] + ATP = O-phospho-L-threonyl-[protein] + ADP + H(+). The sequence is that of Probable protein kinase DDB_G0291842 from Dictyostelium discoideum (Social amoeba).